The chain runs to 363 residues: Histidinol-phosphate aminotransferase (363 aa).

Lys220 is subject to N6-(pyridoxal phosphate)lysine.

Belongs to the class-II pyridoxal-phosphate-dependent aminotransferase family. Histidinol-phosphate aminotransferase subfamily. In terms of assembly, homodimer. The cofactor is pyridoxal 5'-phosphate.

It catalyses the reaction L-histidinol phosphate + 2-oxoglutarate = 3-(imidazol-4-yl)-2-oxopropyl phosphate + L-glutamate. It participates in amino-acid biosynthesis; L-histidine biosynthesis; L-histidine from 5-phospho-alpha-D-ribose 1-diphosphate: step 7/9. This Paramagnetospirillum magneticum (strain ATCC 700264 / AMB-1) (Magnetospirillum magneticum) protein is Histidinol-phosphate aminotransferase.